A 403-amino-acid chain; its full sequence is Deubiquitinase and deneddylase Dub1 (403 aa).

Over residues 1–11 (MLSPTNSTSKT) the composition is skewed to polar residues. A disordered region spans residues 1-24 (MLSPTNSTSKTAPVPPRDSSKPVL). The helical transmembrane segment at 40–60 (TALAVLLVVVTLGLILLFYSF) threads the bilayer. The disordered stretch occupies residues 77 to 132 (KEQPTISIPVPLPSPPLAVPRPSTPPAPTPAISRPSTPSAPKPSTPPPLLPKAPKP). Composition is skewed to pro residues over residues 86-105 (VPLPSPPLAVPRPSTPPAPT) and 114-130 (PSAPKPSTPPPLLPKAP). Active-site residues include His277, Asp294, and Cys347.

The protein belongs to the peptidase C48 family.

It localises to the secreted. It is found in the host cell. Its subcellular location is the membrane. Effector proteins function to alter host cell physiology and promote bacterial survival in host tissues. This protease possesses deubiquitinating and deneddylating activities. This chain is Deubiquitinase and deneddylase Dub1 (cdu1), found in Chlamydia trachomatis serovar L2b (strain UCH-1/proctitis).